A 712-amino-acid chain; its full sequence is Anaerobic ribonucleoside-triphosphate reductase (712 aa).

Residues 3 to 92 form the ATP-cone domain; sequence PHVMKRDGCK…EYRHDRDIER (90 aa). The Glycine radical domain occupies 583–708; the sequence is KKVNPYDKID…VKRRVKHLGN (126 aa). Positions 644, 647, 662, and 665 each coordinate Zn(2+). The residue at position 681 (glycine 681) is a Glycine radical.

Belongs to the anaerobic ribonucleoside-triphosphate reductase family. As to quaternary structure, homodimer. Forms a tetramer composed of two NrdD and two NrdG subunits.

The enzyme catalyses a ribonucleoside 5'-triphosphate + formate + H(+) = a 2'-deoxyribonucleoside 5'-triphosphate + CO2 + H2O. It catalyses the reaction formate + ATP + H(+) = dATP + CO2 + H2O. The catalysed reaction is CTP + formate + H(+) = dCTP + CO2 + H2O. It carries out the reaction GTP + formate + H(+) = dGTP + CO2 + H2O. The enzyme catalyses UTP + formate + H(+) = dUTP + CO2 + H2O. Activated under anaerobic conditions by NrdG, a tightly associated activase. Activation involves the formation of a glycyl radical at Gly-681. Exposure of the activated reductase to oxygen leads to C-terminal truncation and inactivation of the protein, by cleavage at the N-terminal side of Gly-681. The presence of zinc protects the protein from proteolysis and prevents the formation of disulfide bridges within it. The enzyme shows a basal activity in the absence of any effector, but reduction is stimulated up to 10-fold by an appropriate modulator (dGTP for ATP reduction, ATP for CTP and UTP reduction, and dTTP for GTP reduction). dGTP and dTTP inhibit the reduction of the incorrect substrate, and dATP inhibits reduction of all four. These modulators act as allosteric effectors. Its function is as follows. Catalyzes the conversion of ribonucleotides into deoxyribonucleotides, which are required for DNA synthesis and repair. Can reduce each of the four common ribonucleoside triphosphates. The chain is Anaerobic ribonucleoside-triphosphate reductase from Escherichia coli (strain K12).